Here is a 352-residue protein sequence, read N- to C-terminus: tRNA-specific 2-thiouridylase MnmA (352 aa).

ATP contacts are provided by residues 9–16 (ALSGGVDS) and M35. C96 serves as the catalytic Nucleophile. An intrachain disulfide couples C96 to C192. Position 120 (G120) interacts with ATP. The interval 142-144 (KDQ) is interaction with tRNA. The active-site Cysteine persulfide intermediate is C192. Residues 299 to 300 (RY) form an interaction with tRNA region.

This sequence belongs to the MnmA/TRMU family.

The protein resides in the cytoplasm. It catalyses the reaction S-sulfanyl-L-cysteinyl-[protein] + uridine(34) in tRNA + AH2 + ATP = 2-thiouridine(34) in tRNA + L-cysteinyl-[protein] + A + AMP + diphosphate + H(+). Its function is as follows. Catalyzes the 2-thiolation of uridine at the wobble position (U34) of tRNA, leading to the formation of s(2)U34. This is tRNA-specific 2-thiouridylase MnmA from Acidithiobacillus ferrooxidans (strain ATCC 23270 / DSM 14882 / CIP 104768 / NCIMB 8455) (Ferrobacillus ferrooxidans (strain ATCC 23270)).